Here is an 885-residue protein sequence, read N- to C-terminus: Disease resistance protein RFL1 (885 aa).

Residues 27–61 (SYIQNLSENLASLQKAMGVLNAKRDDVQGRINREE) are a coiled coil. The NB-ARC domain maps to 141–443 (EAAPIAEVEE…CEGFIKEKQG (303 aa)). 183-190 (GMGGVGKT) contributes to the ATP binding site. LRR repeat units follow at residues 517 to 538 (AVKR…PECV), 539 to 561 (ELIT…FFRC), 564 to 586 (SLAV…ISEL), 588 to 610 (SLQY…HELR), 611 to 633 (KLVH…SYLS), 634 to 655 (SLRT…MKEL), and 657 to 679 (LLEH…LFCY).

This sequence belongs to the disease resistance NB-LRR family.

Its function is as follows. Disease resistance (R) protein. This Arabidopsis thaliana (Mouse-ear cress) protein is Disease resistance protein RFL1 (RFL1).